We begin with the raw amino-acid sequence, 138 residues long: Superoxide dismutase [Mn] (138 aa).

Mn(2+) is bound by residues Ser-1, His-49, Asp-133, and His-137.

This sequence belongs to the iron/manganese superoxide dismutase family. It depends on Mn(2+) as a cofactor.

The enzyme catalyses 2 superoxide + 2 H(+) = H2O2 + O2. In terms of biological role, destroys superoxide anion radicals which are normally produced within the cells and which are toxic to biological systems. This is Superoxide dismutase [Mn] (sodA) from Mycobacterium marinum.